Here is a 614-residue protein sequence, read N- to C-terminus: Probable ATP-dependent RNA helicase DDX5 (614 aa).

The segment covering methionine 1–glycine 15 has biased composition (basic and acidic residues). The interval methionine 1–glutamate 39 is disordered. The residue at position 24 (serine 24) is a Phosphoserine. At lysine 32 the chain carries N6-acetyllysine; alternate. Lysine 32 participates in a covalent cross-link: Glycyl lysine isopeptide (Lys-Gly) (interchain with G-Cter in SUMO2); alternate. Lysine 33 and lysine 40 each carry N6-acetyllysine. A Glycyl lysine isopeptide (Lys-Gly) (interchain with G-Cter in SUMO2) cross-link involves residue lysine 45. A Glycyl lysine isopeptide (Lys-Gly) (interchain with G-Cter in SUMO2); alternate cross-link involves residue lysine 53. Lysine 53 is covalently cross-linked (Glycyl lysine isopeptide (Lys-Gly) (interchain with G-Cter in SUMO); alternate). A Glycyl lysine isopeptide (Lys-Gly) (interchain with G-Cter in SUMO1); alternate cross-link involves residue lysine 53. Positions leucine 94–alanine 122 match the Q motif motif. Residues phenylalanine 114 to glutamate 116, glutamine 121, and alanine 138 to threonine 145 contribute to the ATP site. The 176-residue stretch at tryptophan 125 to isoleucine 300 folds into the Helicase ATP-binding domain. At lysine 236 the chain carries N6-acetyllysine. A DEAD box motif is present at residues aspartate 248–aspartate 251. Tyrosine 297 carries the phosphotyrosine modification. The region spanning lysine 328 to valine 475 is the Helicase C-terminal domain. Glycyl lysine isopeptide (Lys-Gly) (interchain with G-Cter in SUMO2) cross-links involve residues lysine 340, lysine 343, lysine 388, lysine 391, lysine 411, lysine 437, lysine 451, and lysine 470. A disordered region spans residues aspartate 477 to glycine 504. Residues aspartate 477–glutamine 614 are transactivation domain. Position 480 is a phosphoserine (serine 480). The span at glycine 488–serine 498 shows a compositional bias: basic and acidic residues. Lysine 523 is covalently cross-linked (Glycyl lysine isopeptide (Lys-Gly) (interchain with G-Cter in SUMO2)).

The protein belongs to the DEAD box helicase family. DDX5/DBP2 subfamily. As to quaternary structure, identified in the spliceosome C complex. Component of a ribonucleoprotein complex containing mRNAs and RNA-binding proteins including DDX5, HNRNPH2 and SRSF1 as well as splicing regulator ARVCF. Interacts with RBM4; the interaction occurs in an RNA-independent manner. Interacts with AGO1 and AGO2. Interacts with ESR1, AR, EP300, CREBBP, POLR2A, TP53, RUNX2 and HDAC1. Self-associates. Interacts with DDX17. Interacts with BRDT. The large PER complex involved in the repression of transcriptional termination is composed of at least PER2, CDK9, DDX5, DHX9, NCBP1 and POLR2A (active). Interacts with DHX36; this interaction occurs in a RNA-dependent manner. Interacts with NUPR1. Interacts with ERCC6. Interacts with DDX3X in the cytoplasm; this interaction may be more efficient when both proteins are unphosphorylated. In terms of processing, sumoylated; sumoylation, promoted by PIAS1, promotes interaction with HDAC1 and transcriptional repression activity. Sumoylation also significantly increases stability, and reduces polyubiquitination. Post-translationally, polyubiquitinated, leading to proteasomal degradation. Weakly phosphorylated in the G1/S phase of the cell cycle and much more at G2/M, especially at Thr and Tyr residues.

It localises to the nucleus. Its subcellular location is the nucleolus. The protein resides in the cytoplasm. It carries out the reaction ATP + H2O = ADP + phosphate + H(+). In terms of biological role, involved in the alternative regulation of pre-mRNA splicing; its RNA helicase activity is necessary for increasing tau exon 10 inclusion and occurs in a RBM4-dependent manner. Binds to the tau pre-mRNA in the stem-loop region downstream of exon 10. The rate of ATP hydrolysis is highly stimulated by single-stranded RNA. Involved in transcriptional regulation; the function is independent of the RNA helicase activity. Transcriptional coactivator for androgen receptor AR but probably not ESR1. Synergizes with DDX17 and SRA1 RNA to activate MYOD1 transcriptional activity and involved in skeletal muscle differentiation. Transcriptional coactivator for p53/TP53 and involved in p53/TP53 transcriptional response to DNA damage and p53/TP53-dependent apoptosis. Transcriptional coactivator for RUNX2 and involved in regulation of osteoblast differentiation. Acts as a transcriptional repressor in a promoter-specific manner; the function probably involves association with histone deacetylases, such as HDAC1. As component of a large PER complex is involved in the inhibition of 3' transcriptional termination of circadian target genes such as PER1 and NR1D1 and the control of the circadian rhythms. In Mus musculus (Mouse), this protein is Probable ATP-dependent RNA helicase DDX5 (Ddx5).